Reading from the N-terminus, the 97-residue chain is Protein RADIALIS-like 6 (97 aa).

The 53-residue stretch at 7–59 (SSISPWTFSQNKMFERALAVYDKDTPDRWHNVAKAVGGKTVEEVKRHYDILVE) folds into the SANT domain.

In terms of tissue distribution, expressed in the micropylar endosperm surrounding globular-stage embryos but no expression was detected elsewhere, including floral tissues.

The protein localises to the nucleus. In terms of biological role, probable transcription factor. In Arabidopsis thaliana (Mouse-ear cress), this protein is Protein RADIALIS-like 6 (RL6).